An 89-amino-acid chain; its full sequence is ATP synthase subunit c, sodium ion specific (89 aa).

The next 2 membrane-spanning stretches (helical) occupy residues 9–29 (VVLA…IGPG) and 68–88 (GIYS…VGLL).

This sequence belongs to the ATPase C chain family. In terms of assembly, F-type ATPases have 2 components, F(1) - the catalytic core - and F(0) - the membrane sodium channel. F(1) has five subunits: alpha(3), beta(3), gamma(1), delta(1), epsilon(1). F(0) has three main subunits: a(1), b(2) and c(10-14). The alpha and beta chains form an alternating ring which encloses part of the gamma chain. F(1) is attached to F(0) by a central stalk formed by the gamma and epsilon chains, while a peripheral stalk is formed by the delta and b chains.

It is found in the cell membrane. Its function is as follows. F(1)F(0) ATP synthase produces ATP from ADP in the presence of a proton or sodium gradient. F-type ATPases consist of two structural domains, F(1) containing the extramembraneous catalytic core and F(0) containing the membrane sodium channel, linked together by a central stalk and a peripheral stalk. During catalysis, ATP synthesis in the catalytic domain of F(1) is coupled via a rotary mechanism of the central stalk subunits to sodium translocation. Key component of the F(0) channel; it plays a direct role in translocation across the membrane. A homomeric c-ring of between 10-14 subunits forms the central stalk rotor element with the F(1) delta and epsilon subunits. The polypeptide is ATP synthase subunit c, sodium ion specific (atpE) (Propionigenium modestum).